We begin with the raw amino-acid sequence, 218 residues long: Fibroblast growth factor 15 (218 aa).

The N-terminal stretch at 1–25 (MARKWNGRAVARALVLATLWLAVSG) is a signal peptide.

Belongs to the heparin-binding growth factors family. In terms of assembly, interacts with MALRD1. Expressed in the developing brain.

The protein localises to the secreted. Functionally, involved in the suppression of bile acid biosynthesis through down-regulation of CYP7A1 expression. The protein is Fibroblast growth factor 15 (Fgf15) of Mus musculus (Mouse).